A 438-amino-acid chain; its full sequence is Serine hydroxymethyltransferase (438 aa).

Residues Leu-135 and 139 to 141 (GHL) contribute to the (6S)-5,6,7,8-tetrahydrofolate site. Lys-244 carries the N6-(pyridoxal phosphate)lysine modification. The segment at 361-383 (GVPNDPLPPVKTSGIRVGSPAGT) is disordered.

This sequence belongs to the SHMT family. Homodimer. The cofactor is pyridoxal 5'-phosphate.

It is found in the cytoplasm. The catalysed reaction is (6R)-5,10-methylene-5,6,7,8-tetrahydrofolate + glycine + H2O = (6S)-5,6,7,8-tetrahydrofolate + L-serine. The protein operates within one-carbon metabolism; tetrahydrofolate interconversion. It functions in the pathway amino-acid biosynthesis; glycine biosynthesis; glycine from L-serine: step 1/1. Functionally, catalyzes the reversible interconversion of serine and glycine with tetrahydrofolate (THF) serving as the one-carbon carrier. This reaction serves as the major source of one-carbon groups required for the biosynthesis of purines, thymidylate, methionine, and other important biomolecules. Also exhibits THF-independent aldolase activity toward beta-hydroxyamino acids, producing glycine and aldehydes, via a retro-aldol mechanism. This chain is Serine hydroxymethyltransferase, found in Rhizorhabdus wittichii (strain DSM 6014 / CCUG 31198 / JCM 15750 / NBRC 105917 / EY 4224 / RW1) (Sphingomonas wittichii).